Here is a 312-residue protein sequence, read N- to C-terminus: Zinc-finger homeodomain protein 4 (312 aa).

Residues 20–74 (GGGGSHGHMIHHHDHHAANSAPPTHNNNNTTQPPPMPLHGNGHGNNYDHHHHQDP) form a disordered region. Residues 37–50 (ANSAPPTHNNNNTT) are compositionally biased toward low complexity. Residues 90–139 (YKECLKNHAAAMGGNATDGCGEFMPSGEDGSIEALTCSACNCHRNFHRKE) form a ZF-HD dimerization-type; degenerate zinc finger. The segment at residues 218-281 (KKRFRTKFTP…NNKIHFSKKN (64 aa)) is a DNA-binding region (homeobox).

In terms of assembly, homo- and heterodimer with other ZFHD proteins. Interacts with ZHD1, ZHD2, ZHD5, ZHD7, ZHD8, ZHD10 and ZHD11. As to expression, mostly expressed in flowers and inflorescence.

Its subcellular location is the nucleus. Putative transcription factor. Probably involved in the regulation of floral induction. The protein is Zinc-finger homeodomain protein 4 (ZHD4) of Arabidopsis thaliana (Mouse-ear cress).